Consider the following 101-residue polypeptide: Small ribosomal subunit protein uS14 (101 aa).

It belongs to the universal ribosomal protein uS14 family. In terms of assembly, part of the 30S ribosomal subunit. Contacts proteins S3 and S10.

In terms of biological role, binds 16S rRNA, required for the assembly of 30S particles and may also be responsible for determining the conformation of the 16S rRNA at the A site. The protein is Small ribosomal subunit protein uS14 of Burkholderia multivorans (strain ATCC 17616 / 249).